Here is a 247-residue protein sequence, read N- to C-terminus: Sortase A (247 aa).

Over 1–9 (MRNKKKLHG) the chain is Cytoplasmic. A helical membrane pass occupies residues 10–30 (FFNFVRWLLVVLLIIVGLALV). Over 31–247 (FNKPIRNAFI…FSKKYNQINL (217 aa)) the chain is Extracellular. Catalysis depends on His140, which acts as the Proton donor/acceptor. Cys206 (acyl-thioester intermediate) is an active-site residue.

Belongs to the bacterial sortase family. Class A subfamily.

Its subcellular location is the cell membrane. In terms of biological role, transpeptidase that anchors surface proteins to the cell wall. Recognizes and modifies its substrate by proteolytic cleavage of a C-terminal sorting signal. Following cleavage, a covalent intermediate is formed via a thioester bond between the sortase and its substrate, which is then transferred and covalently attached to the cell wall. This sortase recognizes a Leu-Pro-x-Thr-Gly (LPXTG) motif, which is cleaved by the sortase between the threonine and glycine residues. Essential for adherence to eukaryotic cells and for binding to fibronectin and fibrinogen. This is Sortase A from Streptococcus agalactiae serotype III (strain NEM316).